We begin with the raw amino-acid sequence, 460 residues long: CUGBP Elav-like family member 6 (460 aa).

Low complexity predominate over residues 1 to 10; the sequence is MAAAPGGSAP. The disordered stretch occupies residues 1–37; it reads MAAAPGGSAPPAGPSPRLAFSTADSGGGMSGLNPGPA. RRM domains follow at residues 46 to 127 and 134 to 214; these read IKLF…PAAS and RKLF…LADT. Residues 316–336 are disordered; it reads NGFGSLTPQSNGQPGSDTLYN. The span at 319–336 shows a compositional bias: polar residues; sequence GSLTPQSNGQPGSDTLYN. Residues 375–453 enclose the RRM 3 domain; it reads CNLFIYHLPQ…KRLKVQLKRP (79 aa).

It belongs to the CELF/BRUNOL family.

It localises to the nucleus. The protein localises to the cytoplasm. Its function is as follows. RNA-binding protein implicated in the regulation of pre-mRNA alternative splicing. Mediates exon inclusion and/or exclusion in pre-mRNA that are subject to tissue-specific and developmentally regulated alternative splicing. Specifically activates exon 5 inclusion of TNNT2 in a muscle-specific splicing enhancer (MSE)-dependent manner. Promotes also exon exclusion of INSR pre-mRNA. The sequence is that of CUGBP Elav-like family member 6 (Celf6) from Mus musculus (Mouse).